A 182-amino-acid chain; its full sequence is Envelope glycoprotein L (182 aa).

The N-terminal stretch at 1–39 is a signal peptide; the sequence is MRRSAARGRAVSSTQTAMGAGAAIAVWAAALIALYSSCA. Residues 52 to 182 form the gL alphaherpesvirus-type domain; that stretch reads ANASDTIGRL…RPEKTAPGGV (131 aa). A disulfide bridge links Cys-73 with Cys-109.

Belongs to the herpesviridae glycoprotein L (gL) family. Alphaherpesvirinae gL subfamily. Interacts with glycoprotein H (gH); this interaction is necessary for the correct processing and cell surface expression of gH. The heterodimer gH/gL seems to interact with gB trimers during fusion. Post-translationally, O-glycosylated, and sialylated.

The protein localises to the virion membrane. The protein resides in the host cell membrane. It is found in the host Golgi apparatus. It localises to the host trans-Golgi network. Its function is as follows. The heterodimer glycoprotein H-glycoprotein L is required for the fusion of viral and plasma membranes leading to virus entry into the host cell. Acts as a functional inhibitor of gH and maintains gH in an inhibited form. Upon binding to host integrins, gL dissociates from gH leading to activation of the viral fusion glycoproteins gB and gH. The protein is Envelope glycoprotein L of Amazona oratrix (yellow-headed parrot).